A 481-amino-acid polypeptide reads, in one-letter code: Threonine synthase (481 aa).

Lys-118 is subject to N6-(pyridoxal phosphate)lysine.

It belongs to the threonine synthase family. As to quaternary structure, monomer. The cofactor is pyridoxal 5'-phosphate.

The enzyme catalyses O-phospho-L-homoserine + H2O = L-threonine + phosphate. It participates in amino-acid biosynthesis; L-threonine biosynthesis; L-threonine from L-aspartate: step 5/5. Its function is as follows. Catalyzes the gamma-elimination of phosphate from L-phosphohomoserine and the beta-addition of water to produce L-threonine. The polypeptide is Threonine synthase (thrC) (Corynebacterium glutamicum (strain ATCC 13032 / DSM 20300 / JCM 1318 / BCRC 11384 / CCUG 27702 / LMG 3730 / NBRC 12168 / NCIMB 10025 / NRRL B-2784 / 534)).